The sequence spans 356 residues: sn-glycerol-3-phosphate import ATP-binding protein UgpC (356 aa).

In terms of domain architecture, ABC transporter spans 4–235 (LKLQAVTKSW…PASRFVASFI (232 aa)). Residue 37 to 44 (GPSGCGKS) participates in ATP binding.

Belongs to the ABC transporter superfamily. sn-glycerol-3-phosphate importer (TC 3.A.1.1.3) family. As to quaternary structure, the complex is composed of two ATP-binding proteins (UgpC), two transmembrane proteins (UgpA and UgpE) and a solute-binding protein (UgpB).

It is found in the cell inner membrane. It catalyses the reaction sn-glycerol 3-phosphate(out) + ATP + H2O = sn-glycerol 3-phosphate(in) + ADP + phosphate + H(+). Part of the ABC transporter complex UgpBAEC involved in sn-glycerol-3-phosphate (G3P) import. Responsible for energy coupling to the transport system. This Salmonella choleraesuis (strain SC-B67) protein is sn-glycerol-3-phosphate import ATP-binding protein UgpC.